Reading from the N-terminus, the 664-residue chain is Zinc finger protein 800 (664 aa).

Residues 69–91 (FECKLCRSLFRGLPNLITHKKFY) form a C2H2-type 1; degenerate zinc finger. Lysine 132 is covalently cross-linked (Glycyl lysine isopeptide (Lys-Gly) (interchain with G-Cter in SUMO2)). Composition is skewed to polar residues over residues 154–179 (IEVTESSSTPEQTEVQIQETSTEQSK) and 207–224 (SDEQPQESQADLETSDNS). A disordered region spans residues 154-224 (IEVTESSSTP…QADLETSDNS (71 aa)). A C2H2-type 2 zinc finger spans residues 230–253 (LICCLCRKEFNSRRGVRRHIRKVH). A Glycyl lysine isopeptide (Lys-Gly) (interchain with G-Cter in SUMO2) cross-link involves residue lysine 279. The segment at 287-310 (RSCPVCCKSFATKANVRRHFDEVH) adopts a C2H2-type 3 zinc-finger fold. A Phosphoserine modification is found at serine 317. Threonine 319 carries the phosphothreonine modification. Residues 328–349 (QPLFLDSISPKKSFKTRKQKSS) are disordered. Position 336 is a phosphoserine (serine 336). Over residues 339-348 (KSFKTRKQKS) the composition is skewed to basic residues. The C2H2-type 4 zinc finger occupies 357–382 (TACKCLLCKRKYSSQIMLKRHMQIVH). The tract at residues 388–476 (GTNSKREKGP…GGQQKTRKPK (89 aa)) is disordered. Lysine 392 participates in a covalent cross-link: Glycyl lysine isopeptide (Lys-Gly) (interchain with G-Cter in SUMO2). Residue lysine 409 forms a Glycyl lysine isopeptide (Lys-Gly) (interchain with G-Cter in SUMO1); alternate linkage. Lysine 409 participates in a covalent cross-link: Glycyl lysine isopeptide (Lys-Gly) (interchain with G-Cter in SUMO2); alternate. The segment covering 416–436 (VESSPPSITHSPQNELKGTNH) has biased composition (polar residues). Serine 422, serine 426, serine 455, serine 457, serine 460, and serine 462 each carry phosphoserine. The span at 458–470 (PKSTSPSAAGGQQ) shows a compositional bias: polar residues. A Glycyl lysine isopeptide (Lys-Gly) (interchain with G-Cter in SUMO2) cross-link involves residue lysine 476. C2H2-type zinc fingers lie at residues 486 to 508 (LYCKLCKRQFTSKQNLTKHIELH) and 519 to 542 (YKCPLCTYETRRKRDVIRHITVVH). 2 disordered regions span residues 574-599 (KRGPSRDEAKHSDSKHDGTSNSPSKK) and 635-664 (HHKKTHKANASNSPEGNKTKGRSTRSKALV). Residues 577 to 591 (PSRDEAKHSDSKHDG) show a composition bias toward basic and acidic residues. A Glycyl lysine isopeptide (Lys-Gly) (interchain with G-Cter in SUMO2) cross-link involves residue lysine 599. A C2H2-type 7 zinc finger spans residues 618-640 (HRCNKCGKAFAKKTYLEHHKKTH). Residues 653 to 664 (TKGRSTRSKALV) show a composition bias toward basic residues.

It belongs to the krueppel C2H2-type zinc-finger protein family.

Its subcellular location is the nucleus. May be involved in transcriptional regulation. This is Zinc finger protein 800 (ZNF800) from Homo sapiens (Human).